The primary structure comprises 292 residues: 2-hydroxy-3-oxopropionate reductase (292 aa).

Residues 4 to 18 (GFIGLGIMGTPMAIN) and S94 contribute to the NAD(+) site. K169 is a catalytic residue. Residue K237 coordinates NAD(+).

It belongs to the HIBADH-related family.

The enzyme catalyses (R)-glycerate + NADP(+) = 2-hydroxy-3-oxopropanoate + NADPH + H(+). The catalysed reaction is (R)-glycerate + NAD(+) = 2-hydroxy-3-oxopropanoate + NADH + H(+). Its pathway is organic acid metabolism; glycolate degradation; 3-phospho-D-glycerate from glycolate: step 3/4. The protein is 2-hydroxy-3-oxopropionate reductase (glxR) of Escherichia coli (strain K12).